A 903-amino-acid chain; its full sequence is Translation initiation factor IF-2 (903 aa).

The segment at 66–296 is disordered; it reads QATLKGEGPV…GRSRKREMEN (231 aa). Over residues 121-132 the composition is skewed to basic and acidic residues; that stretch reads NTDETRVQEHKP. Low complexity-rich tracts occupy residues 139 to 152 and 178 to 195; these read AGDAPAAEGTAAAG and AATGQRAQGGEAGRGQQS. Residues 204–231 are compositionally biased toward basic and acidic residues; sequence EGRSRQDENKGSAREDQANRFATRDKEA. Over residues 246-255 the composition is skewed to basic residues; the sequence is RRPAHSKPLR. Basic and acidic residues-rich tracts occupy residues 263 to 276 and 285 to 296; these read VTKDLPEKRRDRSN and ESGRSRKREMEN. Residues 403–572 enclose the tr-type G domain; sequence ERPPVVTVMG…LLTADVAELK (170 aa). Residues 412-419 are G1; it reads GHVDHGKT. 412–419 contributes to the GTP binding site; sequence GHVDHGKT. The G2 stretch occupies residues 437–441; the sequence is GITQH. Positions 458–461 are G3; that stretch reads DTPG. GTP contacts are provided by residues 458–462 and 512–515; these read DTPGH and NKID. The tract at residues 512–515 is G4; sequence NKID. The tract at residues 548–550 is G5; the sequence is SAV.

The protein belongs to the TRAFAC class translation factor GTPase superfamily. Classic translation factor GTPase family. IF-2 subfamily.

Its subcellular location is the cytoplasm. Functionally, one of the essential components for the initiation of protein synthesis. Protects formylmethionyl-tRNA from spontaneous hydrolysis and promotes its binding to the 30S ribosomal subunits. Also involved in the hydrolysis of GTP during the formation of the 70S ribosomal complex. This chain is Translation initiation factor IF-2, found in Moorella thermoacetica (strain ATCC 39073 / JCM 9320).